Here is a 603-residue protein sequence, read N- to C-terminus: DNA ligase (603 aa).

Glu262 contributes to the ATP binding site. Catalysis depends on Lys264, which acts as the N6-AMP-lysine intermediate. 6 residues coordinate ATP: Arg269, Arg285, Glu315, Phe355, Arg432, and Lys438.

The protein belongs to the ATP-dependent DNA ligase family. Requires Mg(2+) as cofactor.

It catalyses the reaction ATP + (deoxyribonucleotide)n-3'-hydroxyl + 5'-phospho-(deoxyribonucleotide)m = (deoxyribonucleotide)n+m + AMP + diphosphate.. Functionally, DNA ligase that seals nicks in double-stranded DNA during DNA replication, DNA recombination and DNA repair. This is DNA ligase from Caldivirga maquilingensis (strain ATCC 700844 / DSM 13496 / JCM 10307 / IC-167).